Reading from the N-terminus, the 188-residue chain is uncharacterized protein (188 aa).

The interval 57–80 (NDDVAPVAEGPKQERRSPSRNIGR) is disordered.

Belongs to the transposase 25 family.

This is an uncharacterized protein from Sinorhizobium fredii (strain NBRC 101917 / NGR234).